A 79-amino-acid polypeptide reads, in one-letter code: uncharacterized protein (79 aa).

The protein resides in the mitochondrion. This is an uncharacterized protein from Oenothera berteroana (Bertero's evening primrose).